The primary structure comprises 688 residues: TBC1 domain family member 25 (688 aa).

Residues 1–27 are disordered; that stretch reads MATASGASDLSGSGAPPPGVGAQAAAA. The residue at position 140 (S140) is a Phosphoserine. Residue T160 is modified to Phosphothreonine. Positions 228 to 434 constitute a Rab-GAP TBC domain; that stretch reads GVEPSLRKVV…RMLEVTWSSL (207 aa). The residue at position 506 (S506) is a Phosphoserine. Low complexity predominate over residues 544–567; the sequence is LNSPDPLLSSFSHPDSPSSSSPPS. The interval 544–606 is disordered; it reads LNSPDPLLSS…LPPVPPMGLP (63 aa). Pro residues predominate over residues 596–606; the sequence is SLPPVPPMGLP.

As to quaternary structure, interacts (via N-terminus) with MAP1LC3B, GABARAP and GABARAPL2.

The protein localises to the cytoplasm. It localises to the cytoplasmic vesicle. Its subcellular location is the autophagosome. In terms of biological role, acts as a GTPase-activating protein specific for RAB33B. Involved in the regulation of autophagosome maturation, the process in which autophagosomes fuse with endosomes and lysosomes. This Homo sapiens (Human) protein is TBC1 domain family member 25 (TBC1D25).